The following is a 265-amino-acid chain: MDKSKNLFDLLQDDEEVEKKPTTKSTQAAAAPVAAKKPVAPKTENKVENRSPKLGGQSKPKRVNNGEQQVATSEERQNTKRDSKSYPKHQPRTDATGNIRNRQFDRKSGTGRPHNENKKGGAGQGNWGKEGSVDAETNVATVTPTEGEKESTEPVVAAPVEDKTLTLGEYLKQQGSVTLEAPKLRVAGEGETKNAQWDEFEPIQREVVKQRDTKSVKEEKKTKKNVIQVELKSAPSTQRPKGNTKKVVKGVDVTDVNIFPSLSKA.

The segment at 1 to 160 (MDKSKNLFDL…STEPVVAAPV (160 aa)) is disordered. A compositionally biased stretch (low complexity) spans 28–42 (AAAAPVAAKKPVAPK). Composition is skewed to basic and acidic residues over residues 73-85 (SEER…DSKS) and 102-119 (RQFD…ENKK).

This sequence belongs to the SERBP1-HABP4 family.

Its function is as follows. Ribosome-binding protein that acts as a regulator of mRNA translation by promoting ribosome inactivation. This is an uncharacterized protein from Dictyostelium discoideum (Social amoeba).